A 599-amino-acid chain; its full sequence is Aspartate--tRNA(Asp/Asn) ligase (599 aa).

Glutamate 180 lines the L-aspartate pocket. Residues 204-207 (QLLK) form an aspartate region. Arginine 226 lines the L-aspartate pocket. ATP-binding positions include 226–228 (RDE) and glutamine 235. Histidine 457 lines the L-aspartate pocket. Glutamate 491 lines the ATP pocket. An L-aspartate-binding site is contributed by arginine 498. ATP is bound at residue 543–546 (GWDR). A disordered region spans residues 565–599 (KAGGGRDPLTGAPAPISDEQRAETGVDYDPDADEN). The segment covering 590–599 (VDYDPDADEN) has biased composition (acidic residues).

The protein belongs to the class-II aminoacyl-tRNA synthetase family. Type 1 subfamily. As to quaternary structure, homodimer.

Its subcellular location is the cytoplasm. It carries out the reaction tRNA(Asx) + L-aspartate + ATP = L-aspartyl-tRNA(Asx) + AMP + diphosphate. Aspartyl-tRNA synthetase with relaxed tRNA specificity since it is able to aspartylate not only its cognate tRNA(Asp) but also tRNA(Asn). Reaction proceeds in two steps: L-aspartate is first activated by ATP to form Asp-AMP and then transferred to the acceptor end of tRNA(Asp/Asn). This Bifidobacterium longum (strain NCC 2705) protein is Aspartate--tRNA(Asp/Asn) ligase.